The sequence spans 75 residues: Translation initiation factor IF-1, chloroplastic (75 aa).

Residues 1-72 (MKKQNLIHAE…TKGRIIYRLS (72 aa)) enclose the S1-like domain.

Belongs to the IF-1 family. As to quaternary structure, component of the 30S ribosomal translation pre-initiation complex which assembles on the 30S ribosome in the order IF-2 and IF-3, IF-1 and N-formylmethionyl-tRNA(fMet); mRNA recruitment can occur at any time during PIC assembly.

The protein localises to the plastid. Its subcellular location is the chloroplast. Its function is as follows. One of the essential components for the initiation of protein synthesis. Stabilizes the binding of IF-2 and IF-3 on the 30S subunit to which N-formylmethionyl-tRNA(fMet) subsequently binds. Helps modulate mRNA selection, yielding the 30S pre-initiation complex (PIC). Upon addition of the 50S ribosomal subunit IF-1, IF-2 and IF-3 are released leaving the mature 70S translation initiation complex. The chain is Translation initiation factor IF-1, chloroplastic from Pinus koraiensis (Korean pine).